The following is an 80-amino-acid chain: Homeobox protein 7 (80 aa).

The homeobox DNA-binding region spans 8–67 (SNIRNIRSSGISTKKLEDFFSINQYPNKNEIKDFANYYQCDETKIKNWFKGKRDRLKKKS). Residues 60–80 (RDRLKKKSSNNEKSGNKFYFK) form a disordered region. The segment covering 70-80 (NEKSGNKFYFK) has biased composition (low complexity).

It is found in the nucleus. Its function is as follows. Putative transcription factor. The sequence is that of Homeobox protein 7 (hbx7) from Dictyostelium discoideum (Social amoeba).